The primary structure comprises 312 residues: Malate dehydrogenase (312 aa).

NAD(+) is bound by residues Gly-7–Gly-13 and Asp-34. 2 residues coordinate substrate: Arg-81 and Arg-87. NAD(+) is bound by residues Asn-94 and Ile-117–Asn-119. Residues Asn-119 and Arg-153 each contribute to the substrate site. Residue His-177 is the Proton acceptor of the active site. Position 227 (Met-227) interacts with NAD(+).

It belongs to the LDH/MDH superfamily. MDH type 1 family. As to quaternary structure, homodimer.

It carries out the reaction (S)-malate + NAD(+) = oxaloacetate + NADH + H(+). In terms of biological role, catalyzes the reversible oxidation of malate to oxaloacetate. The chain is Malate dehydrogenase from Cronobacter sakazakii (strain ATCC BAA-894) (Enterobacter sakazakii).